The sequence spans 83 residues: Small ribosomal subunit protein bS16 (83 aa).

This sequence belongs to the bacterial ribosomal protein bS16 family.

The polypeptide is Small ribosomal subunit protein bS16 (Finegoldia magna (strain ATCC 29328 / DSM 20472 / WAL 2508) (Peptostreptococcus magnus)).